We begin with the raw amino-acid sequence, 239 residues long: tRNA (guanine-N(7)-)-methyltransferase (239 aa).

S-adenosyl-L-methionine is bound by residues Glu-69, Glu-94, Asp-121, and Asp-144. The active site involves Asp-144. Residue Lys-148 coordinates substrate. The tract at residues 150–155 is interaction with RNA; sequence RHNKRR. Substrate is bound by residues Asp-180 and 217–220; that span reads TKFE.

Belongs to the class I-like SAM-binding methyltransferase superfamily. TrmB family. In terms of assembly, monomer.

It catalyses the reaction guanosine(46) in tRNA + S-adenosyl-L-methionine = N(7)-methylguanosine(46) in tRNA + S-adenosyl-L-homocysteine. Its pathway is tRNA modification; N(7)-methylguanine-tRNA biosynthesis. Catalyzes the formation of N(7)-methylguanine at position 46 (m7G46) in tRNA. The protein is tRNA (guanine-N(7)-)-methyltransferase of Pectobacterium atrosepticum (strain SCRI 1043 / ATCC BAA-672) (Erwinia carotovora subsp. atroseptica).